Reading from the N-terminus, the 273-residue chain is Formamidopyrimidine-DNA glycosylase (273 aa).

Proline 2 acts as the Schiff-base intermediate with DNA in catalysis. Glutamate 3 (proton donor) is an active-site residue. Lysine 58 acts as the Proton donor; for beta-elimination activity in catalysis. Residues histidine 91, arginine 110, and arginine 153 each coordinate DNA. The FPG-type zinc-finger motif lies at 238–272 (KVYGKEGQPCPRCGEDFVKIKISGRGTTYCLHCQK). Arginine 262 serves as the catalytic Proton donor; for delta-elimination activity.

Belongs to the FPG family. Monomer. Zn(2+) is required as a cofactor.

It catalyses the reaction Hydrolysis of DNA containing ring-opened 7-methylguanine residues, releasing 2,6-diamino-4-hydroxy-5-(N-methyl)formamidopyrimidine.. The enzyme catalyses 2'-deoxyribonucleotide-(2'-deoxyribose 5'-phosphate)-2'-deoxyribonucleotide-DNA = a 3'-end 2'-deoxyribonucleotide-(2,3-dehydro-2,3-deoxyribose 5'-phosphate)-DNA + a 5'-end 5'-phospho-2'-deoxyribonucleoside-DNA + H(+). Its function is as follows. Involved in base excision repair of DNA damaged by oxidation or by mutagenic agents. Acts as a DNA glycosylase that recognizes and removes damaged bases. Has a preference for oxidized purines, such as 7,8-dihydro-8-oxoguanine (8-oxoG). Has AP (apurinic/apyrimidinic) lyase activity and introduces nicks in the DNA strand. Cleaves the DNA backbone by beta-delta elimination to generate a single-strand break at the site of the removed base with both 3'- and 5'-phosphates. This is Formamidopyrimidine-DNA glycosylase from Lactobacillus delbrueckii subsp. bulgaricus (strain ATCC 11842 / DSM 20081 / BCRC 10696 / JCM 1002 / NBRC 13953 / NCIMB 11778 / NCTC 12712 / WDCM 00102 / Lb 14).